The sequence spans 105 residues: Delta-hexatoxin-Mg1a (105 aa).

Residues 1 to 18 (MKTLVIACVALVLVVVHG) form the signal peptide. The propeptide occupies 19-60 (EVIEEVNEKQLQESVEEKYSLLQRLEKLDEAITAEENRNSRV). Disulfide bonds link Cys-63–Cys-77, Cys-70–Cys-82, Cys-76–Cys-93, and Cys-78–Cys-105.

It belongs to the neurotoxin 06 (delta-actx) family. As to expression, expressed by the venom gland.

The protein localises to the secreted. In terms of biological role, selectively slows channel inactivation of mammalian Nav1.1/SCN1A, Nav1.3/SCN3A, and Nav1.6/SCN8A and shows higher affinity for insect Nav1/para channels (site 3). Induces tonic repetitive firing of nerve impulses in insect neurons accompanied by plateau potentials. This Macrothele gigas (Japanese funnel web spider) protein is Delta-hexatoxin-Mg1a.